A 139-amino-acid polypeptide reads, in one-letter code: Immunogenic miracidial antigen 8I (139 aa).

The disordered stretch occupies residues 61-139 (IDVGDEDYHD…PKKYGSGYKH (79 aa)). Positions 64-85 (GDEDYHDGDDDVDYTDDVDDVD) are enriched in acidic residues. Polar residues predominate over residues 90-103 (SPSQLLQGGYQRNQ).

The protein belongs to the immunogenic miracidial antigen family.

The chain is Immunogenic miracidial antigen 8I (8I) from Schistosoma japonicum (Blood fluke).